Reading from the N-terminus, the 332-residue chain is GTP 3',8-cyclase (332 aa).

The region spanning 7–221 (SYDRLHDYVR…FDTCKDNGLA (215 aa)) is the Radical SAM core domain. Arg16 serves as a coordination point for GTP. [4Fe-4S] cluster contacts are provided by Cys23 and Cys27. Tyr29 lines the S-adenosyl-L-methionine pocket. Cys30 contacts [4Fe-4S] cluster. Position 66 (Arg66) interacts with GTP. Gly70 serves as a coordination point for S-adenosyl-L-methionine. GTP is bound at residue Thr97. Ser121 contacts S-adenosyl-L-methionine. Lys158 lines the GTP pocket. Met192 provides a ligand contact to S-adenosyl-L-methionine. 2 residues coordinate [4Fe-4S] cluster: Cys256 and Cys259. 261 to 263 (RLR) contacts GTP. Cys273 contributes to the [4Fe-4S] cluster binding site.

It belongs to the radical SAM superfamily. MoaA family. In terms of assembly, monomer and homodimer. [4Fe-4S] cluster serves as cofactor.

It catalyses the reaction GTP + AH2 + S-adenosyl-L-methionine = (8S)-3',8-cyclo-7,8-dihydroguanosine 5'-triphosphate + 5'-deoxyadenosine + L-methionine + A + H(+). It participates in cofactor biosynthesis; molybdopterin biosynthesis. In terms of biological role, catalyzes the cyclization of GTP to (8S)-3',8-cyclo-7,8-dihydroguanosine 5'-triphosphate. The polypeptide is GTP 3',8-cyclase (Lactiplantibacillus plantarum (strain ATCC BAA-793 / NCIMB 8826 / WCFS1) (Lactobacillus plantarum)).